Here is a 310-residue protein sequence, read N- to C-terminus: Acetyl-coenzyme A carboxylase carboxyl transferase subunit beta (310 aa).

Residues Leu-27–Glu-296 form the CoA carboxyltransferase N-terminal domain. Zn(2+) contacts are provided by Cys-31, Cys-34, Cys-50, and Cys-53. Residues Cys-31–Cys-53 form a C4-type zinc finger. The segment at Pro-285–Glu-310 is disordered. Residues Pro-287–Glu-310 show a composition bias toward acidic residues.

It belongs to the AccD/PCCB family. Acetyl-CoA carboxylase is a heterohexamer composed of biotin carboxyl carrier protein (AccB), biotin carboxylase (AccC) and two subunits each of ACCase subunit alpha (AccA) and ACCase subunit beta (AccD). Zn(2+) is required as a cofactor.

It localises to the cytoplasm. It carries out the reaction N(6)-carboxybiotinyl-L-lysyl-[protein] + acetyl-CoA = N(6)-biotinyl-L-lysyl-[protein] + malonyl-CoA. It functions in the pathway lipid metabolism; malonyl-CoA biosynthesis; malonyl-CoA from acetyl-CoA: step 1/1. In terms of biological role, component of the acetyl coenzyme A carboxylase (ACC) complex. Biotin carboxylase (BC) catalyzes the carboxylation of biotin on its carrier protein (BCCP) and then the CO(2) group is transferred by the transcarboxylase to acetyl-CoA to form malonyl-CoA. The protein is Acetyl-coenzyme A carboxylase carboxyl transferase subunit beta of Hahella chejuensis (strain KCTC 2396).